We begin with the raw amino-acid sequence, 494 residues long: Inosine-5'-monophosphate dehydrogenase (494 aa).

CBS domains follow at residues isoleucine 93 to isoleucine 154 and methionine 158 to serine 217. NAD(+) contacts are provided by residues aspartate 251 and glycine 301–glycine 303. K(+) contacts are provided by glycine 303 and glycine 305. Serine 306 contributes to the IMP binding site. Position 308 (cysteine 308) interacts with K(+). Cysteine 308 serves as the catalytic Thioimidate intermediate. IMP contacts are provided by residues aspartate 341–glycine 343, glycine 364–serine 365, and tyrosine 388–glycine 392. The active-site Proton acceptor is arginine 406. Glutamate 421 contributes to the IMP binding site. K(+)-binding residues include glutamate 475, serine 476, and histidine 477.

The protein belongs to the IMPDH/GMPR family. In terms of assembly, homotetramer. Requires K(+) as cofactor.

It carries out the reaction IMP + NAD(+) + H2O = XMP + NADH + H(+). It functions in the pathway purine metabolism; XMP biosynthesis via de novo pathway; XMP from IMP: step 1/1. With respect to regulation, mycophenolic acid (MPA) is a non-competitive inhibitor that prevents formation of the closed enzyme conformation by binding to the same site as the amobile flap. In contrast, mizoribine monophosphate (MZP) is a competitive inhibitor that induces the closed conformation. MPA is a potent inhibitor of mammalian IMPDHs but a poor inhibitor of the bacterial enzymes. MZP is a more potent inhibitor of bacterial IMPDH. Its function is as follows. Catalyzes the conversion of inosine 5'-phosphate (IMP) to xanthosine 5'-phosphate (XMP), the first committed and rate-limiting step in the de novo synthesis of guanine nucleotides, and therefore plays an important role in the regulation of cell growth. This is Inosine-5'-monophosphate dehydrogenase from Chlorobaculum tepidum (strain ATCC 49652 / DSM 12025 / NBRC 103806 / TLS) (Chlorobium tepidum).